The sequence spans 178 residues: CDP-diacylglycerol--glycerol-3-phosphate 3-phosphatidyltransferase (178 aa).

The next 4 helical transmembrane spans lie at 5 to 25 (PNYL…LFYI), 32 to 52 (KLGA…GYIA), 61 to 81 (FGKM…TIML), and 145 to 165 (IIYL…LTII).

This sequence belongs to the CDP-alcohol phosphatidyltransferase class-I family.

The protein resides in the cell membrane. The catalysed reaction is a CDP-1,2-diacyl-sn-glycerol + sn-glycerol 3-phosphate = a 1,2-diacyl-sn-glycero-3-phospho-(1'-sn-glycero-3'-phosphate) + CMP + H(+). It functions in the pathway phospholipid metabolism; phosphatidylglycerol biosynthesis; phosphatidylglycerol from CDP-diacylglycerol: step 1/2. Functionally, this protein catalyzes the committed step to the synthesis of the acidic phospholipids. In Rickettsia typhi (strain ATCC VR-144 / Wilmington), this protein is CDP-diacylglycerol--glycerol-3-phosphate 3-phosphatidyltransferase (pgsA).